The following is a 596-amino-acid chain: Fc receptor-like protein 5 (596 aa).

The first 26 residues, Met-1–Gly-26, serve as a signal peptide directing secretion. Over Gln-27–Ala-496 the chain is Extracellular. Ig-like C2-type domains lie at Ser-34 to Ser-115, Pro-106 to Val-199, Pro-207 to Ile-294, Pro-296 to Ser-384, and Pro-398 to Ser-483. 3 disulfides stabilise this stretch: Cys-55–Cys-99, Cys-137–Cys-181, and Cys-228–Cys-277. A glycan (N-linked (GlcNAc...) asparagine) is linked at Asn-324. 2 cysteine pairs are disulfide-bonded: Cys-325–Cys-373 and Cys-419–Cys-466. The N-linked (GlcNAc...) asparagine glycan is linked to Asn-436. Residues Ala-497–Phe-517 form a helical membrane-spanning segment. At Ser-518–Lys-596 the chain is on the cytoplasmic side. Disordered regions lie at residues Gly-522–Tyr-544 and Glu-561–Lys-596. Basic and acidic residues predominate over residues Lys-577–Lys-596.

Interacts with CR2. Interacts with CD19. In terms of processing, phosphorylated on cytoplasmic tyrosines; required for interaction with protein tyrosine phosphatases and protein tyrosine kinases. In terms of tissue distribution, preferentially expressed in marginal zone B cells.

It is found in the cell membrane. Functionally, plays an important role in B-cell response to antigen that acts both as a negative or positive coreceptor. Inhibits B-cell receptor (BCR) signaling in the absence of CR2 stimulation but engagement with CR2 and the BCR lead to a superior calcium response compared to CR2 and BCR costimulation. May be involved in B-cell development and differentiation in peripheral lymphoid organs and may be useful markers of B-cell stages. May have an immunoregulatory role in marginal zone B-cells. May play a role in fertilization. This is Fc receptor-like protein 5 (Fcrl5) from Mus musculus (Mouse).